The chain runs to 118 residues: Basic phospholipase A2 homolog 1 (118 aa).

7 disulfide bridges follow: Cys11–Cys71, Cys27–Cys117, Cys29–Cys45, Cys44–Cys98, Cys51–Cys91, Cys60–Cys84, and Cys78–Cys89. Positions 106–118 (NKNFNIDTKKRCK) are important for membrane-damaging activities in eukaryotes and bacteria; heparin-binding.

This sequence belongs to the phospholipase A2 family. Group I subfamily. D49 sub-subfamily. Expressed by the venom gland.

It localises to the secreted. The sequence is that of Basic phospholipase A2 homolog 1 from Laticauda colubrina (Yellow-lipped sea krait).